The following is a 328-amino-acid chain: GMP reductase (328 aa).

The active-site Thioimidate intermediate is cysteine 176. 205-228 (IIADGGIRTHGDIAKSIRFGASMI) contributes to the NADP(+) binding site.

The protein belongs to the IMPDH/GMPR family. GuaC type 2 subfamily.

It catalyses the reaction IMP + NH4(+) + NADP(+) = GMP + NADPH + 2 H(+). Catalyzes the irreversible NADPH-dependent deamination of GMP to IMP. It functions in the conversion of nucleobase, nucleoside and nucleotide derivatives of G to A nucleotides, and in maintaining the intracellular balance of A and G nucleotides. This is GMP reductase from Streptococcus pneumoniae (strain JJA).